We begin with the raw amino-acid sequence, 176 residues long: bZIP transcription factor 8 (176 aa).

Residues 44-101 (PNTSGGSDESMSDGSKIDPKRSPKYLEKRMKNNEAAKKSRASRKHREQKNQTENELLK) form a disordered region. The span at 47–57 (SGGSDESMSDG) shows a compositional bias: low complexity. Residues 58–80 (SKIDPKRSPKYLEKRMKNNEAAK) show a composition bias toward basic and acidic residues. The bZIP domain occupies 65–128 (SPKYLEKRMK…AQMQITIRDM (64 aa)). Residues 67–92 (KYLEKRMKNNEAAKKSRASRKHREQK) are basic motif. Basic residues predominate over residues 81-90 (KSRASRKHRE). The span at 91–101 (QKNQTENELLK) shows a compositional bias: basic and acidic residues. The leucine-zipper stretch occupies residues 100–107 (LKRKNAAL).

The protein belongs to the bZIP family.

This is bZIP transcription factor 8 (zip-8) from Caenorhabditis elegans.